The following is a 194-amino-acid chain: Xanthine phosphoribosyltransferase (194 aa).

L20 and N27 together coordinate xanthine. A128–A132 provides a ligand contact to 5-phospho-alpha-D-ribose 1-diphosphate. K156 serves as a coordination point for xanthine.

This sequence belongs to the purine/pyrimidine phosphoribosyltransferase family. Xpt subfamily. In terms of assembly, homodimer.

It localises to the cytoplasm. The catalysed reaction is XMP + diphosphate = xanthine + 5-phospho-alpha-D-ribose 1-diphosphate. It functions in the pathway purine metabolism; XMP biosynthesis via salvage pathway; XMP from xanthine: step 1/1. Its function is as follows. Converts the preformed base xanthine, a product of nucleic acid breakdown, to xanthosine 5'-monophosphate (XMP), so it can be reused for RNA or DNA synthesis. The protein is Xanthine phosphoribosyltransferase of Bacillus licheniformis (strain ATCC 14580 / DSM 13 / JCM 2505 / CCUG 7422 / NBRC 12200 / NCIMB 9375 / NCTC 10341 / NRRL NRS-1264 / Gibson 46).